The primary structure comprises 673 residues: Armadillo repeat-containing protein 8 (673 aa).

Ala-2 is subject to N-acetylalanine. ARM repeat units follow at residues 51 to 92, 95 to 134, 138 to 176, 178 to 217, 224 to 265, 269 to 309, 313 to 352, 374 to 413, 416 to 455, 458 to 497, 501 to 540, 543 to 585, 588 to 627, and 634 to 673; these read NKQK…SLAM, ENNV…TIFT, TPEE…HCCK, PDHQ…VLAF, MTLV…YMCR, IRTD…YLIE, ELQR…HDLK, DIRK…SLSR, QQLR…NLLL, SPSK…NMAF, QKIK…NLLS, PHID…NIAD, TAKD…NLIW, and QERQ…QYLA. Ser-337 carries the phosphoserine modification. Ser-512 carries the post-translational modification Phosphoserine.

As to quaternary structure, identified in the CTLH complex that contains GID4, RANBP9 and/or RANBP10, MKLN1, MAEA, RMND5A (or alternatively its paralog RMND5B), GID8, ARMC8, WDR26 and YPEL5. Within this complex, MAEA, RMND5A (or alternatively its paralog RMND5B), GID8, WDR26, and RANBP9 and/or RANBP10 form the catalytic core, while GID4, MKLN1, ARMC8 and YPEL5 have ancillary roles.

The protein resides in the nucleus. It is found in the cytoplasm. Component of the CTLH E3 ubiquitin-protein ligase complex that selectively accepts ubiquitin from UBE2H and mediates ubiquitination and subsequent proteasomal degradation of the transcription factor HBP1. In Homo sapiens (Human), this protein is Armadillo repeat-containing protein 8 (ARMC8).